The following is a 298-amino-acid chain: Type II methyltransferase M.MjaIV (298 aa).

It carries out the reaction a 2'-deoxyadenosine in DNA + S-adenosyl-L-methionine = an N(6)-methyl-2'-deoxyadenosine in DNA + S-adenosyl-L-homocysteine + H(+). Its function is as follows. A methylase that recognizes the double-stranded sequence 5'-GTNNAC-3', methylates A-5 on both strands, and protects the DNA from cleavage by the MjaIV endonuclease. This is Type II methyltransferase M.MjaIV (mjaIVMP) from Methanocaldococcus jannaschii (strain ATCC 43067 / DSM 2661 / JAL-1 / JCM 10045 / NBRC 100440) (Methanococcus jannaschii).